We begin with the raw amino-acid sequence, 213 residues long: Pyridoxine/pyridoxamine 5'-phosphate oxidase (213 aa).

Substrate-binding positions include 10 to 13 (REEY) and lysine 68. FMN contacts are provided by residues 63–68 (RMLLLK), 78–79 (FT), lysine 85, and glutamine 107. Substrate contacts are provided by tyrosine 125, arginine 129, and serine 133. FMN is bound by residues 142-143 (QS) and tryptophan 186. 192 to 194 (RLH) provides a ligand contact to substrate. Arginine 196 contributes to the FMN binding site.

Belongs to the pyridoxamine 5'-phosphate oxidase family. As to quaternary structure, homodimer. Requires FMN as cofactor.

The enzyme catalyses pyridoxamine 5'-phosphate + O2 + H2O = pyridoxal 5'-phosphate + H2O2 + NH4(+). It carries out the reaction pyridoxine 5'-phosphate + O2 = pyridoxal 5'-phosphate + H2O2. Its pathway is cofactor metabolism; pyridoxal 5'-phosphate salvage; pyridoxal 5'-phosphate from pyridoxamine 5'-phosphate: step 1/1. It functions in the pathway cofactor metabolism; pyridoxal 5'-phosphate salvage; pyridoxal 5'-phosphate from pyridoxine 5'-phosphate: step 1/1. In terms of biological role, catalyzes the oxidation of either pyridoxine 5'-phosphate (PNP) or pyridoxamine 5'-phosphate (PMP) into pyridoxal 5'-phosphate (PLP). The polypeptide is Pyridoxine/pyridoxamine 5'-phosphate oxidase (Nocardioides sp. (strain ATCC BAA-499 / JS614)).